The primary structure comprises 396 residues: Acetate kinase (396 aa).

Asn-8 is a Mg(2+) binding site. Lys-15 provides a ligand contact to ATP. Substrate is bound at residue Arg-89. Asp-146 (proton donor/acceptor) is an active-site residue. ATP contacts are provided by residues His-206–Gly-210, Asp-283–Arg-285, and Gly-331–Asn-335. Mg(2+) is bound at residue Glu-383.

It belongs to the acetokinase family. In terms of assembly, homodimer. It depends on Mg(2+) as a cofactor. The cofactor is Mn(2+).

Its subcellular location is the cytoplasm. It carries out the reaction acetate + ATP = acetyl phosphate + ADP. It participates in metabolic intermediate biosynthesis; acetyl-CoA biosynthesis; acetyl-CoA from acetate: step 1/2. Catalyzes the formation of acetyl phosphate from acetate and ATP. Can also catalyze the reverse reaction. This is Acetate kinase from Streptococcus uberis (strain ATCC BAA-854 / 0140J).